The chain runs to 260 residues: Small ribosomal subunit protein uS2 (260 aa).

The segment at 225–260 (KGQTQTEAAPNAQAAPEAAAPAEQPAEEAAAASSEG) is disordered. Residues 231–260 (EAAPNAQAAPEAAAPAEQPAEEAAAASSEG) show a composition bias toward low complexity.

The protein belongs to the universal ribosomal protein uS2 family.

This chain is Small ribosomal subunit protein uS2, found in Rhodopirellula baltica (strain DSM 10527 / NCIMB 13988 / SH1).